The chain runs to 211 residues: Large ribosomal subunit protein uL3 (211 aa).

The tract at residues 122–157 (NQKRNNFGRGPMSHGSKNHRAPGSIGAGTTPGRVYP) is disordered.

This sequence belongs to the universal ribosomal protein uL3 family. Part of the 50S ribosomal subunit. Forms a cluster with proteins L14 and L19.

In terms of biological role, one of the primary rRNA binding proteins, it binds directly near the 3'-end of the 23S rRNA, where it nucleates assembly of the 50S subunit. The sequence is that of Large ribosomal subunit protein uL3 from Trichormus variabilis (strain ATCC 29413 / PCC 7937) (Anabaena variabilis).